Consider the following 184-residue polypeptide: MSYSKQDIERRMEGALASLASEFAGLRTGRASVNLLDSIQVPAYGGVTPLSQVASVTVSDTRMLSVNVWDKTVVGAADRAIRDSGLGLNPVMDGQTLRIPIPPLNEERRVELTKIAGKYAEAARVAVRNVRRDGMDDLKKAEKDGEISEDRHRALTEEVQKLTDAFVKRVDEALKAKEAEIMQV.

This sequence belongs to the RRF family.

Its subcellular location is the cytoplasm. Functionally, responsible for the release of ribosomes from messenger RNA at the termination of protein biosynthesis. May increase the efficiency of translation by recycling ribosomes from one round of translation to another. The protein is Ribosome-recycling factor of Hyphomonas neptunium (strain ATCC 15444).